Consider the following 123-residue polypeptide: Galanin peptides (123 aa).

Residues 1 to 19 form the signal peptide; the sequence is MARGSALLLASLLLAAALS. A propeptide spanning residues 20–30 is cleaved from the precursor; that stretch reads ASAGLWSPAKE. A disordered region spans residues 46 to 80; the sequence is HAVGNHRSFSDKNGLTSKRELRPEDDMKPGSFDRS. Residues 62 to 73 show a composition bias toward basic and acidic residues; sequence SKRELRPEDDMK. Serine 116 and serine 117 each carry phosphoserine.

It belongs to the galanin family.

The protein resides in the secreted. Its function is as follows. Endocrine hormone of the central and peripheral nervous systems that binds and activates the G protein-coupled receptors GALR1, GALR2, and GALR3. This small neuropeptide may regulate diverse physiologic functions including contraction of smooth muscle of the gastrointestinal and genitourinary tract, growth hormone and insulin release and adrenal secretion. The polypeptide is Galanin peptides (GAL) (Homo sapiens (Human)).